Consider the following 143-residue polypeptide: Actin-depolymerizing factor (143 aa).

Positions 11 to 143 (GMGVADHSKN…DLEVLRERAH (133 aa)) constitute an ADF-H domain.

Belongs to the actin-binding proteins ADF family.

Its function is as follows. Actin-depolymerizing protein. Severs actin filaments (F-actin) and binds to actin monomers. This Vitis vinifera (Grape) protein is Actin-depolymerizing factor.